Here is a 591-residue protein sequence, read N- to C-terminus: Transcription factor COE1 (591 aa).

Position 1 is an N-acetylmethionine (Met-1). Positions 1 to 14 (MFGIQESIQRSGSS) are enriched in polar residues. The disordered stretch occupies residues 1-21 (MFGIQESIQRSGSSMKEEPLG). Lys-16 participates in a covalent cross-link: Glycyl lysine isopeptide (Lys-Gly) (interchain with G-Cter in SUMO1); alternate. Lys-16 is covalently cross-linked (Glycyl lysine isopeptide (Lys-Gly) (interchain with G-Cter in SUMO2); alternate). The tract at residues 63–66 (RKSN) is interaction with DNA. The segment at 151 to 170 (CRVLLTHEIMCSRCCDKKSC) adopts a C5-type zinc-finger fold. 2 interaction with DNA regions span residues 197 to 204 (NCLKNAGN) and 236 to 239 (NNSK). An IPT/TIG domain is found at 262-345 (PCIKAISPSE…KGTPGRFIYT (84 aa)). The segment at 457–480 (GFTRNSSSVSPHGYVPSTTPQQTN) is disordered.

This sequence belongs to the COE family. In terms of assembly, homodimer. Interacts with ZNF423 and ZNF521, leading to prevent EBF1 to bind DNA and activate target genes. Interacts with CCR4-NOT component CNOT3. (Microbial infection) Interacts with Epstein-barr virus protein EBNA2.

The protein resides in the nucleus. Functionally, key pioneer transcription factor of B-cell specification and commitment. Recognizes variations of the palindromic sequence 5'-ATTCCCNNGGGAATT-3'. Operates in a transcription factor network to activate B-cell-specific genes and repress genes associated with alternative cell fates. For instance, positively regulates many B-cell specific genes including BCR or CD40 while repressing genes that direct cells into alternative lineages, including GATA3 and TCF7 for the T-cell lineage. In addition to its role during lymphopoiesis, controls the thermogenic gene program in adipocytes during development and in response to environmental cold. In terms of biological role, (Microbial infection) Acts as a chromatin anchor for Epstein-Barr virus EBNA2 to mediate the assembly of EBNA2 chromatin complexes in B-cells. In addition, binds to the viral LMP1 proximal promoter and promotes its expression during latency. This is Transcription factor COE1 (EBF1) from Homo sapiens (Human).